The sequence spans 335 residues: Phosphatidylcholine:ceramide cholinephosphotransferase 2 (335 aa).

5 helical membrane-spanning segments follow: residues 60–80, 104–124, 136–156, 200–220, and 229–249; these read LTAFLCLMLSAFLNFFLLTVI, WSVGDVLSTVSSVVAFTIIFL, FLLGAIMYGLRAVILGVTFLP, ILCGDLMFSGHTVVLTIMYFV, and LVILRYIAAPITFLGIAALVV. The active site involves His-210. Active-site residues include His-253 and Asp-257. The helical transmembrane segment at 258-278 threads the bilayer; the sequence is VLIAYWLTSHVFWSYHQIFEM. The Cytoplasmic segment spans residues 279-335; sequence RKDDRPQAPLSRLWWFWLCYWFESDVADGKLVNKWNWPLEGPQRMHTIMNRINYKLQ.

It belongs to the sphingomyelin synthase family.

It localises to the membrane. The enzyme catalyses an N-acylsphing-4-enine + a 1,2-diacyl-sn-glycero-3-phosphocholine = a sphingomyelin + a 1,2-diacyl-sn-glycerol. The catalysed reaction is an N-acyl-15-methylhexadecasphing-4-enine + a 1,2-diacyl-sn-glycero-3-phosphocholine = an N-acyl-15-methylhexadecasphing-4-enine-1-phosphocholine + a 1,2-diacyl-sn-glycerol. It functions in the pathway lipid metabolism; sphingolipid metabolism. Its function is as follows. Sphingomyelin synthases (SM synthase or SMS) synthesize the sphingolipid sphingomyelin (SM) through transfer of the phosphatidyl head group of 1,2-diacyl-sn-glycero-3-phosphocholine (phosphatidylcholine, PC) on to the primary hydroxyl of ceramide (N-acylsphingoid base), yielding 1,2-diacyl-sn-glycerol (diacylglycerol, DAG) as a side product. Functions as a bidirectional lipid cholinephosphotransferases capable of converting PC and ceramide to SM and DAG and vice versa depending on the respective levels of ceramide and DAG as phosphocholine acceptors, respectively. The sequence is that of Phosphatidylcholine:ceramide cholinephosphotransferase 2 (sms-2) from Caenorhabditis elegans.